A 485-amino-acid polypeptide reads, in one-letter code: Pre-glycoprotein polyprotein GP complex (485 aa).

Glycine 2 carries the N-myristoyl glycine; by host lipid modification. Residues 2–17 lie on the Extracellular side of the membrane; that stretch reads GQFISFMQEIPTFLQE. Residues 18–33 form a helical membrane-spanning segment; sequence ALNIALVAVSLIAIIK. Over 34–58 the chain is Cytoplasmic; the sequence is GVVNLYKSGLFQFFVFLALAGRSCT. Cysteine 57 contributes to the Zn(2+) binding site. Residues 59–424 lie on the Extracellular side of the membrane; sequence EEAFKIGLHT…QGKTPLTLVD (366 aa). Cystine bridges form between cysteine 92–cysteine 226, cysteine 135–cysteine 164, cysteine 207–cysteine 213, cysteine 271–cysteine 284, cysteine 293–cysteine 302, and cysteine 356–cysteine 377. Residues asparagine 95 and asparagine 105 are each glycosylated (N-linked (GlcNAc...) asparagine; by host). N-linked (GlcNAc...) asparagine; by host glycosylation is found at asparagine 166 and asparagine 178. The fusion stretch occupies residues 250 to 286; it reads LKAFFSWSLTDSSGKDTPGGYCLEEWMLVAAKMKCFG. An HR1 region spans residues 287 to 355; sequence NTAVAKCNLN…KIRELMSVPY (69 aa). Asparagine 357, asparagine 365, asparagine 382, and asparagine 387 each carry an N-linked (GlcNAc...) asparagine; by host glycan. Positions 360–423 are HR2; the sequence is KFWYVNHTLS…RQGKTPLTLV (64 aa). A helical membrane pass occupies residues 425–445; the sequence is ICFWSTVFFTASLFLHLVGIP. Over 446–485 the chain is Cytoplasmic; the sequence is THRHIRGEACPLPHRLNSLGGCRCGKYPNLKKPTVWRRGH. 7 residues coordinate Zn(2+): histidine 447, histidine 449, cysteine 455, histidine 459, cysteine 467, cysteine 469, and histidine 485.

It belongs to the arenaviridae GPC protein family. In terms of assembly, interacts with glycoprotein G2. Part of the GP complex (GP-C) together with glycoprotein G1 and glycoprotein G2. The GP-complex interacts with protein Z, which interacts with ribonucleocapsid; these interactions may induce virion budding. As to quaternary structure, homotrimer; disulfide-linked. In pre-fusion state, G1 homotrimers bind G2 homotrimers via ionic interactions. Part of the GP complex (GP-C) together with glycoprotein G2 and the stable signal peptide. Interacts with host TFRC. The GP-complex interacts with protein Z, which interacts with ribonucleocapsid; these interactions may induce virion budding. Homotrimer. Interacts with the stable signal peptide. In pre-fusion state, G2 homotrimers bind G1 homotrimers via ionic interactions. Part of the GP complex (GP-C) together with glycoprotein G1 and the stable signal peptide. Acidification in the endosome triggers rearrangements, which ultimately leads to a 6 helix bundle formed by the two heptad repeat domains (HR1 and HR2) in post-fusion state. The GP-complex interacts with protein Z, which interacts with ribonucleocapsid; these interactions may induce virion budding. Specific enzymatic cleavages in vivo yield mature proteins. GP-C polyprotein is cleaved in the endoplasmic reticulum by the host protease MBTPS1. Only cleaved glycoprotein is incorporated into virions. In terms of processing, the SSP remains stably associated with the GP complex following cleavage by signal peptidase and plays crucial roles in the trafficking of GP through the secretory pathway. Post-translationally, myristoylation is necessary for GP2-mediated fusion activity.

It is found in the virion membrane. Its subcellular location is the host endoplasmic reticulum membrane. The protein localises to the host Golgi apparatus membrane. The protein resides in the host cell membrane. Functionally, functions as a cleaved signal peptide that is retained as the third component of the GP complex (GP-C). Helps to stabilize the spike complex in its native conformation. The SSP is required for efficient glycoprotein expression, post-translational maturation cleavage of G1 and G2, glycoprotein transport to the cell surface plasma membrane, formation of infectious virus particles, and acid pH-dependent glycoprotein-mediated cell fusion. Forms the virion spikes together with glycoprotein G2. The glycoprotein spike trimers are connected to the underlying matrix. Mediates virus attachment to host TFRC. This attachment induces virion internalization predominantly through clathrin-mediated endocytosis. In terms of biological role, forms the virion spikes together with glycoprotein G1. The glycoprotein spike trimers are connected to the underlying matrix. Class I viral fusion protein that directs fusion of viral and host endosomal membranes, leading to delivery of the nucleocapsid into the cytoplasm. Membrane fusion is mediated by irreversible conformational changes induced by acidification. The sequence is that of Pre-glycoprotein polyprotein GP complex from Junin mammarenavirus (JUNV).